The following is a 137-amino-acid chain: Small ribosomal subunit protein bS18c (137 aa).

Belongs to the bacterial ribosomal protein bS18 family. As to quaternary structure, part of the 30S ribosomal subunit.

The protein localises to the plastid. Its subcellular location is the chloroplast. The sequence is that of Small ribosomal subunit protein bS18c (rps18) from Chlamydomonas reinhardtii (Chlamydomonas smithii).